The chain runs to 306 residues: Immune protein Tsi7 (306 aa).

In terms of assembly, interacts with Tse7.

Functionally, immunity protein that plays a role in preventing early activation of toxin Tse7. Protects thereby cells from Tse7 DNase activity. In Pseudomonas aeruginosa (strain ATCC 15692 / DSM 22644 / CIP 104116 / JCM 14847 / LMG 12228 / 1C / PRS 101 / PAO1), this protein is Immune protein Tsi7.